A 278-amino-acid chain; its full sequence is Bifunctional protein FolD (278 aa).

NADP(+) contacts are provided by residues 165 to 167 (GRS), Ser190, and Thr231.

Belongs to the tetrahydrofolate dehydrogenase/cyclohydrolase family. In terms of assembly, homodimer.

The catalysed reaction is (6R)-5,10-methylene-5,6,7,8-tetrahydrofolate + NADP(+) = (6R)-5,10-methenyltetrahydrofolate + NADPH. It carries out the reaction (6R)-5,10-methenyltetrahydrofolate + H2O = (6R)-10-formyltetrahydrofolate + H(+). It functions in the pathway one-carbon metabolism; tetrahydrofolate interconversion. Its function is as follows. Catalyzes the oxidation of 5,10-methylenetetrahydrofolate to 5,10-methenyltetrahydrofolate and then the hydrolysis of 5,10-methenyltetrahydrofolate to 10-formyltetrahydrofolate. The polypeptide is Bifunctional protein FolD (Clostridium novyi (strain NT)).